Here is a 194-residue protein sequence, read N- to C-terminus: dTTP/UTP pyrophosphatase (194 aa).

Catalysis depends on aspartate 77, which acts as the Proton acceptor.

Belongs to the Maf family. YhdE subfamily. Requires a divalent metal cation as cofactor.

Its subcellular location is the cytoplasm. The enzyme catalyses dTTP + H2O = dTMP + diphosphate + H(+). It carries out the reaction UTP + H2O = UMP + diphosphate + H(+). Nucleoside triphosphate pyrophosphatase that hydrolyzes dTTP and UTP. May have a dual role in cell division arrest and in preventing the incorporation of modified nucleotides into cellular nucleic acids. The polypeptide is dTTP/UTP pyrophosphatase (Flavobacterium johnsoniae (strain ATCC 17061 / DSM 2064 / JCM 8514 / BCRC 14874 / CCUG 350202 / NBRC 14942 / NCIMB 11054 / UW101) (Cytophaga johnsonae)).